The sequence spans 440 residues: Glutamyl-tRNA reductase (440 aa).

Substrate-binding positions include 50–53 (TCNR), serine 109, 114–116 (EPQ), and glutamine 120. Cysteine 51 acts as the Nucleophile in catalysis. Residue 189 to 194 (GAGEMA) participates in NADP(+) binding.

It belongs to the glutamyl-tRNA reductase family. In terms of assembly, homodimer.

It catalyses the reaction (S)-4-amino-5-oxopentanoate + tRNA(Glu) + NADP(+) = L-glutamyl-tRNA(Glu) + NADPH + H(+). It participates in porphyrin-containing compound metabolism; protoporphyrin-IX biosynthesis; 5-aminolevulinate from L-glutamyl-tRNA(Glu): step 1/2. Its function is as follows. Catalyzes the NADPH-dependent reduction of glutamyl-tRNA(Glu) to glutamate 1-semialdehyde (GSA). The protein is Glutamyl-tRNA reductase of Nitratidesulfovibrio vulgaris (strain DP4) (Desulfovibrio vulgaris).